The following is a 397-amino-acid chain: Acetate kinase 2 (397 aa).

Asn-10 is a binding site for Mg(2+). Lys-17 provides a ligand contact to ATP. Arg-90 is a substrate binding site. The active-site Proton donor/acceptor is Asp-147. ATP contacts are provided by residues 207–211, 281–283, and 329–333; these read HLGNG, DAR, and GIGEN. Glu-385 is a Mg(2+) binding site.

This sequence belongs to the acetokinase family. In terms of assembly, homodimer. Mg(2+) is required as a cofactor. Requires Mn(2+) as cofactor.

It localises to the cytoplasm. It catalyses the reaction acetate + ATP = acetyl phosphate + ADP. The protein operates within metabolic intermediate biosynthesis; acetyl-CoA biosynthesis; acetyl-CoA from acetate: step 1/2. Catalyzes the formation of acetyl phosphate from acetate and ATP. Can also catalyze the reverse reaction. This is Acetate kinase 2 from Vibrio cholerae serotype O1 (strain ATCC 39315 / El Tor Inaba N16961).